Here is a 157-residue protein sequence, read N- to C-terminus: Phosphopantetheine adenylyltransferase (157 aa).

S8 serves as a coordination point for substrate. Residues S8–F9 and H16 each bind ATP. Substrate contacts are provided by K40, T72, and R86. Residues G87–R89, E97, and H122–S128 contribute to the ATP site.

This sequence belongs to the bacterial CoaD family. As to quaternary structure, homohexamer. The cofactor is Mg(2+).

The protein localises to the cytoplasm. It catalyses the reaction (R)-4'-phosphopantetheine + ATP + H(+) = 3'-dephospho-CoA + diphosphate. The protein operates within cofactor biosynthesis; coenzyme A biosynthesis; CoA from (R)-pantothenate: step 4/5. Reversibly transfers an adenylyl group from ATP to 4'-phosphopantetheine, yielding dephospho-CoA (dPCoA) and pyrophosphate. This chain is Phosphopantetheine adenylyltransferase, found in Prochlorococcus marinus (strain MIT 9303).